We begin with the raw amino-acid sequence, 783 residues long: Glucosidase YgjK (783 aa).

A signal peptide spans 1 to 22 (MKIKTILTPVTCALLISFSAHA). Residues 24–254 (NADNYKNVIN…TTLYTTYSHL (231 aa)) are N-terminal domain. The linker stretch occupies residues 254 to 299 (LLTAQEVSKEQMQIRDILARPAFYLTASQQRWEEYLKKGLTNPDAT). The a domain stretch occupies residues 300-783 (PEQTRVAVKA…MLYNDFFRKQ (484 aa)). Ca(2+) contacts are provided by Asp454, Asn456, Asn458, Val460, and Glu462. Asp524 (proton donor) is an active-site residue. Glu572 provides a ligand contact to Ca(2+). Residue Glu750 is the Proton acceptor of the active site.

Belongs to the glycosyl hydrolase 63 family.

Functionally, glucoside hydrolase that cleaves the alpha-1,3-glucosidic linkage in nigerose. Has very low activity towards maltooligosaccharides, soluble starch, nigerotriose, kojibiose and trehalose. This chain is Glucosidase YgjK (ygjK), found in Escherichia coli (strain K12).